Consider the following 95-residue polypeptide: Signal recognition particle 19 kDa protein (95 aa).

This sequence belongs to the SRP19 family. Part of the signal recognition particle protein translocation system, which is composed of SRP and FtsY. Archaeal SRP consists of a 7S RNA molecule of 300 nucleotides and two protein subunits: SRP54 and SRP19.

It is found in the cytoplasm. Involved in targeting and insertion of nascent membrane proteins into the cytoplasmic membrane. Binds directly to 7S RNA and mediates binding of the 54 kDa subunit of the SRP. The sequence is that of Signal recognition particle 19 kDa protein from Staphylothermus marinus (strain ATCC 43588 / DSM 3639 / JCM 9404 / F1).